Consider the following 163-residue polypeptide: Ribosome maturation factor RimM (163 aa).

The 66-residue stretch at 90-155 (VGEYYCKDLV…ADIDLNKKRL (66 aa)) folds into the PRC barrel domain.

Belongs to the RimM family. Binds ribosomal protein uS19.

The protein resides in the cytoplasm. Its function is as follows. An accessory protein needed during the final step in the assembly of 30S ribosomal subunit, possibly for assembly of the head region. Essential for efficient processing of 16S rRNA. May be needed both before and after RbfA during the maturation of 16S rRNA. It has affinity for free ribosomal 30S subunits but not for 70S ribosomes. This Neorickettsia sennetsu (strain ATCC VR-367 / Miyayama) (Ehrlichia sennetsu) protein is Ribosome maturation factor RimM.